Consider the following 343-residue polypeptide: MLSLKMPQLLRVHQVPRVFWEEGIMSGYRCPTSSALDCVLSSFQMTNETVNIWTHFLPTWYFLWRLLALGSPGFRADPYHLPLLVFLLPACLYPFASCCAHTFSSMSPRARHICYFLDYGALSLYSLGCAFPYAAYSMPASWLHSRLHQLFVPAAALNSFLCTGLSCYSRFPELEYPGFSKALRTAAFAYPFLFDNLPLFYRLRLCWGGAHSCGRDALSSNHGYHLLCALLSGFLFAARLPERLAPGRFDYIGHSHQLFHICAVLGTHFQLEAVLADMGSRRAWLAVQEPTLGLGATVATLSLAVIGNLFIIAAFTASLLRMPGPCPLLQGSPLEEGLQAKQQ.

Topologically, residues 1–49 (MLSLKMPQLLRVHQVPRVFWEEGIMSGYRCPTSSALDCVLSSFQMTNET) are cytoplasmic. Residues 50 to 70 (VNIWTHFLPTWYFLWRLLALG) traverse the membrane as a helical segment. Residues 71–79 (SPGFRADPY) lie on the Extracellular side of the membrane. Residues 80–100 (HLPLLVFLLPACLYPFASCCA) form a helical membrane-spanning segment. Topologically, residues 101 to 112 (HTFSSMSPRARH) are cytoplasmic. The helical transmembrane segment at 113 to 133 (ICYFLDYGALSLYSLGCAFPY) threads the bilayer. Topologically, residues 134–146 (AAYSMPASWLHSR) are extracellular. The chain crosses the membrane as a helical span at residues 147 to 167 (LHQLFVPAAALNSFLCTGLSC). The Cytoplasmic segment spans residues 168 to 216 (YSRFPELEYPGFSKALRTAAFAYPFLFDNLPLFYRLRLCWGGAHSCGRD). A helical transmembrane segment spans residues 217-237 (ALSSNHGYHLLCALLSGFLFA). Residues 238-257 (ARLPERLAPGRFDYIGHSHQ) lie on the Extracellular side of the membrane. Residues 258–278 (LFHICAVLGTHFQLEAVLADM) traverse the membrane as a helical segment. Topologically, residues 279–291 (GSRRAWLAVQEPT) are cytoplasmic. A helical transmembrane segment spans residues 292-312 (LGLGATVATLSLAVIGNLFII). The Extracellular portion of the chain corresponds to 313-343 (AAFTASLLRMPGPCPLLQGSPLEEGLQAKQQ).

The protein belongs to the ADIPOR family. Homodimer.

The protein localises to the cell membrane. Plasma membrane progesterone (P4) receptor coupled to G proteins. Seems to act through a G(s) mediated pathway. Involved in neurosteroid inhibition of apoptosis. May be involved in regulating rapid P4 signaling in the nervous system. Also binds dehydroepiandrosterone (DHEA), pregnanolone, pregnenolone and allopregnanolone. This is Membrane progestin receptor delta from Mus musculus (Mouse).